We begin with the raw amino-acid sequence, 229 residues long: Large ribosomal subunit protein uL4 (229 aa).

Residues 62 to 103 (SRRQGTHQVKNRAAVSGSGKKPWKQKGTGRARHSSRRSPIWV) form a disordered region. Over residues 82–97 (KPWKQKGTGRARHSSR) the composition is skewed to basic residues.

It belongs to the universal ribosomal protein uL4 family. Part of the 50S ribosomal subunit.

One of the primary rRNA binding proteins, this protein initially binds near the 5'-end of the 23S rRNA. It is important during the early stages of 50S assembly. It makes multiple contacts with different domains of the 23S rRNA in the assembled 50S subunit and ribosome. Functionally, forms part of the polypeptide exit tunnel. The chain is Large ribosomal subunit protein uL4 from Mycoplasmopsis synoviae (strain 53) (Mycoplasma synoviae).